The primary structure comprises 796 residues: Kinesin-like protein KIF3C (796 aa).

Positions 10 to 367 (ALKVVARCRP…LRFANRAKNI (358 aa)) constitute a Kinesin motor domain. Position 97–104 (97–104 (GQTGTGKT)) interacts with ATP. Disordered regions lie at residues 251 to 292 (ERQN…PKEA), 397 to 421 (EKKGMLGKRPRRKSSRRKKAVSAPA), and 754 to 796 (PSTS…VDHD). Residues 270 to 284 (AGGGGGGGGTSGSGS) show a composition bias toward gly residues. Positions 378-632 (KDTLLREFQE…NEQTRELKLK (255 aa)) form a coiled coil. Residues 401-416 (MLGKRPRRKSSRRKKA) show a composition bias toward basic residues. A globular region spans residues 633–793 (YLIIENFIPP…SAPLHPATVV (161 aa)).

Belongs to the TRAFAC class myosin-kinesin ATPase superfamily. Kinesin family. Kinesin II subfamily. As to quaternary structure, heterodimer of KIF3A and KIF3C.

Its subcellular location is the cytoplasm. It localises to the cytoskeleton. In terms of biological role, microtubule-based anterograde translocator for membranous organelles. The polypeptide is Kinesin-like protein KIF3C (Kif3c) (Rattus norvegicus (Rat)).